A 460-amino-acid polypeptide reads, in one-letter code: MTMIFPKGFMFGTATAAYQIEGAVAEGGRTPSIWDTFSHTGHTLNGDTGDVADDFYHRWEDDLKLLRDLGVNAYRFSIGIPRVIPTPDGKPNQEGLDFYSRIVDRLLEYGIAPIVTLYHWDLPQYMASGDGREGGWLERETAYRIADYAGIVAKCLGDRVHTYTTLNEPWCSAHLSYGGTEHAPGLGAGPLAFRAAHHLNLAHGLMCEAVRAEAGAKPGLSVTLNLQICRGDADAVHRVDLIGNRVFLDPMLRGRYPDELFSITKGICDWGFVCDGDLDLIHQPIDVLGLNYYSTNLVKMSDRPQFPQSTEASTAPGASDVDWLPTAGPHTEMGWNIDPDALYETLVRLNDNYPGMPLVVTENGMACPDKVEVGTDGVKMVHDNDRIDYLRRHLEAVYRAIEEGTDVRGYFAWSLMDNFEWAFGYSKRFGLTYVDYESQERVKKDSFDWYRRFIADHSAR.

Glu168 functions as the Proton donor in the catalytic mechanism. Glu362 serves as the catalytic Nucleophile.

It belongs to the glycosyl hydrolase 1 family. As to quaternary structure, monomer.

Its subcellular location is the secreted. The enzyme catalyses Hydrolysis of terminal, non-reducing beta-D-glucosyl residues with release of beta-D-glucose.. The catalysed reaction is Hydrolysis of terminal non-reducing beta-D-fucose residues in beta-D-fucosides.. Inhibited by Cu(2+), Ag(+) and Hg(+), but not by other cations such as Mg(2+), Ca(2+), Mn(2+) and Co(2+). Inhibited by 1-amino-1-deoxy-D-glucose and p-chloromercuribenzoic acid, but not by EDTA or dithiothreitol. Inhibited by the disaccharides sucrose, lactose and cellobiose. The monosaccharides D-fructose, D-mannose, D-xylose and D-glucose increase the beta-D-fucosidase activity, but not the beta-D-glucosidase activity. D-glucose inhibits the beta-D-glucosidase activity, but promotes the beta-D-fucosidase activity. D-fucose inhibits the beta-D-glucosidase activity and does not significantly affect the beta-D-fucosidase activity. Functionally, bifunctional beta-D-glucosidase/beta-D-fucosidase. Activity towards pNP-beta-D-fucoside is about 80-85% of the activity towards pNP-beta-D-glucoside. Also has slight activity (less than 10%) towards pNP-beta-D-galactoside, and very low activity (less than 1%) towards pNP-beta-D-xyloside. Hydrolyzes laminaribiose, sophorose, cellobiose and gentobiose. Not active against maltose, pNP-alpha-D-glucoside or pNP-beta-L-fucoside. The sequence is that of Bifunctional beta-D-glucosidase/beta-D-fucosidase from Bifidobacterium breve.